A 218-amino-acid polypeptide reads, in one-letter code: Small ribosomal subunit protein uS3 (218 aa).

The 69-residue stretch at 38 to 106 folds into the KH type-2 domain; sequence LRNDLKKKLM…PVHLNIEEVK (69 aa).

The protein belongs to the universal ribosomal protein uS3 family. Part of the 30S ribosomal subunit. Forms a tight complex with proteins S10 and S14.

Functionally, binds the lower part of the 30S subunit head. Binds mRNA in the 70S ribosome, positioning it for translation. This Legionella pneumophila (strain Paris) protein is Small ribosomal subunit protein uS3.